The primary structure comprises 332 residues: DNA-directed RNA polymerase subunit alpha (332 aa).

Positions 1–232 (MQVSNFLKPR…DQLTAFVELE (232 aa)) are alpha N-terminal domain (alpha-NTD). The interval 246 to 332 (IDPVLLQPID…LREEETKVTA (87 aa)) is alpha C-terminal domain (alpha-CTD).

The protein belongs to the RNA polymerase alpha chain family. Homodimer. The RNAP catalytic core consists of 2 alpha, 1 beta, 1 beta' and 1 omega subunit. When a sigma factor is associated with the core the holoenzyme is formed, which can initiate transcription.

The catalysed reaction is RNA(n) + a ribonucleoside 5'-triphosphate = RNA(n+1) + diphosphate. DNA-dependent RNA polymerase catalyzes the transcription of DNA into RNA using the four ribonucleoside triphosphates as substrates. The sequence is that of DNA-directed RNA polymerase subunit alpha from Nitrosococcus oceani (strain ATCC 19707 / BCRC 17464 / JCM 30415 / NCIMB 11848 / C-107).